A 544-amino-acid chain; its full sequence is Chaperonin GroEL (544 aa).

ATP contacts are provided by residues threonine 29 to proline 32, lysine 50, aspartate 86 to threonine 90, glycine 414, and aspartate 494.

It belongs to the chaperonin (HSP60) family. Forms a cylinder of 14 subunits composed of two heptameric rings stacked back-to-back. Interacts with the co-chaperonin GroES.

Its subcellular location is the cytoplasm. It catalyses the reaction ATP + H2O + a folded polypeptide = ADP + phosphate + an unfolded polypeptide.. Its function is as follows. Together with its co-chaperonin GroES, plays an essential role in assisting protein folding. The GroEL-GroES system forms a nano-cage that allows encapsulation of the non-native substrate proteins and provides a physical environment optimized to promote and accelerate protein folding. This Amoebophilus asiaticus (strain 5a2) protein is Chaperonin GroEL.